Here is a 122-residue protein sequence, read N- to C-terminus: Small ribosomal subunit protein uS13 (122 aa).

The disordered stretch occupies residues L94–K122. Positions Q101 to K122 are enriched in basic residues.

Belongs to the universal ribosomal protein uS13 family. Part of the 30S ribosomal subunit. Forms a loose heterodimer with protein S19. Forms two bridges to the 50S subunit in the 70S ribosome.

Functionally, located at the top of the head of the 30S subunit, it contacts several helices of the 16S rRNA. In the 70S ribosome it contacts the 23S rRNA (bridge B1a) and protein L5 of the 50S subunit (bridge B1b), connecting the 2 subunits; these bridges are implicated in subunit movement. Contacts the tRNAs in the A and P-sites. The polypeptide is Small ribosomal subunit protein uS13 (Chlamydia muridarum (strain MoPn / Nigg)).